Reading from the N-terminus, the 131-residue chain is Small ribosomal subunit protein uS11 (131 aa).

It belongs to the universal ribosomal protein uS11 family. Part of the 30S ribosomal subunit. Interacts with proteins S7 and S18. Binds to IF-3.

Functionally, located on the platform of the 30S subunit, it bridges several disparate RNA helices of the 16S rRNA. Forms part of the Shine-Dalgarno cleft in the 70S ribosome. The protein is Small ribosomal subunit protein uS11 of Helicobacter pylori (strain ATCC 700392 / 26695) (Campylobacter pylori).